Reading from the N-terminus, the 102-residue chain is uncharacterized protein (102 aa).

This is an uncharacterized protein from Sinorhizobium fredii (strain NBRC 101917 / NGR234).